The following is a 239-amino-acid chain: Derlin-2 (239 aa).

The Cytoplasmic portion of the chain corresponds to 1–57 (MAYQSLRLEYLQIPPVSRAYTTACVLTTAAVQLELITPFQLYFNPELIFKHFQIWRL). Residues 58–78 (ITNFLFFGPVGFNFLFNMIFL) form a helical membrane-spanning segment. Residues 79 to 96 (YRYCRMLEEGSFRGRTAD) lie on the Lumenal side of the membrane. The helical transmembrane segment at 97–117 (FVFMFLFGGFLMTLFGLFVSL) threads the bilayer. At 118-150 (VFLGQAFTIMLVYVWSRRNPYVRMNFFGLLNFQ) the chain is on the cytoplasmic side. Residues 151–171 (APFLPWVLMGFSLLLGNSIIV) traverse the membrane as a helical segment. Asp-172 is a topological domain (lumenal). A helical transmembrane segment spans residues 173 to 193 (LLGIAVGHIYFFLEDIFPNQP). The Cytoplasmic segment spans residues 194-239 (GGIRILKTPSILRTIFDTPDEDPNYNPLPEERPGGFAWGEGQRLGG). Positions 214-239 (EDPNYNPLPEERPGGFAWGEGQRLGG) are disordered. Positions 229–239 (FAWGEGQRLGG) are enriched in gly residues.

It belongs to the derlin family. As to quaternary structure, forms homo- and heterooligomers with DERL3 and, to a lesser extent, with DERL1. Interacts with the SEL1L/SYVN1 and VCP/SELENOS protein complexes. Mediates association between VCP and EDEM1, as well as that between VCP and the misfolded glycoproteins. Interacts with OS9. Interacts with SELENOK and SELENOS. Interacts with the signal recognition particle/SRP and the SRP receptor; in the process of endoplasmic reticulum stress-induced pre-emptive quality control. Interacts with CCDC47. As to expression, widely expressed, with lowest levels in brain and heart.

Its subcellular location is the endoplasmic reticulum membrane. Its function is as follows. Functional component of endoplasmic reticulum-associated degradation (ERAD) for misfolded lumenal glycoproteins, but not that of misfolded nonglycoproteins. May act by forming a channel that allows the retrotranslocation of misfolded glycoproteins into the cytosol where they are ubiquitinated and degraded by the proteasome. May mediate the interaction between VCP and misfolded glycoproteins. May also be involved in endoplasmic reticulum stress-induced pre-emptive quality control, a mechanism that selectively attenuates the translocation of newly synthesized proteins into the endoplasmic reticulum and reroutes them to the cytosol for proteasomal degradation. This chain is Derlin-2, found in Mus musculus (Mouse).